The sequence spans 91 residues: Cell division protein CrgA (91 aa).

Polar residues predominate over residues 1 to 24; it reads MPKSKITTEGSALPQSSSSATNRT. The tract at residues 1–28 is disordered; the sequence is MPKSKITTEGSALPQSSSSATNRTPVKI. 2 helical membrane-spanning segments follow: residues 38–58 and 68–88; these read IAIM…NYLA and LGPW…LMTM.

The protein belongs to the CrgA family.

It localises to the cell membrane. Its function is as follows. Involved in cell division. The sequence is that of Cell division protein CrgA from Corynebacterium aurimucosum (strain ATCC 700975 / DSM 44827 / CIP 107346 / CN-1) (Corynebacterium nigricans).